The following is a 791-amino-acid chain: 1-phosphatidylinositol 4,5-bisphosphate phosphodiesterase delta-4 (791 aa).

The region spanning 16 to 124 (LLMQKGTMMR…WMQGLQLLVG (109 aa)) is the PH domain. Positions 26 to 53 (KVRSKSWKKLRFFRLQDDGMTVWHARQA) are substrate binding. 3 consecutive EF-hand domains span residues 134–169 (RLDQ…MNVE), 170–205 (MDQE…LTQR), and 207–237 (EVQE…EQKE). Residues D147, N149, D151, R153, E158, D183, S185, S187, T189, and E194 each coordinate Ca(2+). The GBA signature appears at 213 to 243 (EKFSSDGQKLTLLEFVDFLQEEQKEGERASD). The PI-PLC X-box domain maps to 290–435 (QDMTQPLNHY…LRGKILVKGK (146 aa)). The active site involves H305. Residues N306, E335, and D337 each contribute to the Ca(2+) site. H350 is an active-site residue. Residue E384 participates in Ca(2+) binding. The substrate site is built by K433, K435, S551, and R578. Positions 522–638 (LSALVVYLKA…GYVLKPDFLR (117 aa)) constitute a PI-PLC Y-box domain. A C2 domain is found at 638-765 (RDAQSSFHPE…QGYRHIHLLS (128 aa)). 6 residues coordinate Ca(2+): I679, D681, N705, D734, Y735, and D736. Positions 760–763 (HIHL) match the PDZ-binding motif.

In terms of assembly, interacts with GRIP1. Interacts (via GBA motif) with guanine nucleotide-binding protein G(i) alpha subunit GNAI3 (inactive GDP-bound form); low-affinity interaction. It depends on Ca(2+) as a cofactor.

It is found in the membrane. The protein resides in the nucleus. The protein localises to the cytoplasm. It localises to the endoplasmic reticulum. It carries out the reaction a 1,2-diacyl-sn-glycero-3-phospho-(1D-myo-inositol-4,5-bisphosphate) + H2O = 1D-myo-inositol 1,4,5-trisphosphate + a 1,2-diacyl-sn-glycerol + H(+). The enzyme catalyses a 1,2-diacyl-sn-glycero-3-phospho-(1D-myo-inositol) + H2O = 1D-myo-inositol 1-phosphate + a 1,2-diacyl-sn-glycerol + H(+). In terms of biological role, hydrolyzes the phosphatidylinositol 4,5-bisphosphate (PIP2) to generate 2 second messenger molecules diacylglycerol (DAG) and inositol 1,4,5-trisphosphate (IP3). DAG mediates the activation of protein kinase C (PKC), while IP3 releases Ca(2+) from intracellular stores. Required for acrosome reaction in sperm during fertilization, probably by acting as an important enzyme for intracellular Ca(2+) mobilization in the zona pellucida-induced acrosome reaction. May play a role in cell growth. Modulates the liver regeneration in cooperation with nuclear PKC. Overexpression up-regulates the Erk signaling pathway and proliferation. The polypeptide is 1-phosphatidylinositol 4,5-bisphosphate phosphodiesterase delta-4 (PLCD4) (Bos taurus (Bovine)).